The sequence spans 215 residues: MTFNIIKLENWDRKEYFEHYFNQQTTYSITKEIDITLFKDMIKKKGYEIYPSLIYAIMEVVNKNKVFRTGINSENKLGYWDKLNPLYTVFNKQTEKFTNIWTESDNNFTSFYNNYKNDLLEYKDKEEMFPKKPIPENTIPISMIPWIDFSSFNLNIGNNSNFLLPIITIGKFYSENNKIYIPVALQLHHAVCDGYHASLFMNEFQDIIHKVDDWI.

The Proton acceptor role is filled by His189.

Belongs to the chloramphenicol acetyltransferase family. Homotrimer.

It catalyses the reaction chloramphenicol + acetyl-CoA = chloramphenicol 3-acetate + CoA. This enzyme is an effector of chloramphenicol resistance in bacteria. In Staphylococcus aureus, this protein is Chloramphenicol acetyltransferase (cat).